We begin with the raw amino-acid sequence, 407 residues long: uncharacterized protein (407 aa).

The tract at residues 145-231 (EANRFGRSNS…DPLTSITSDT (87 aa)) is disordered. Positions 158–175 (SNSRSKSSRSRSNNRSKS) are enriched in basic residues. Positions 176 to 196 (SRSSSTQSKSNNRSNSRSNSK) are enriched in low complexity. The region spanning 271-407 (IVFETLDQND…NHKIHMEKDI (137 aa)) is the N-acetyltransferase domain.

The protein resides in the virion. This is an uncharacterized protein from Acanthamoeba polyphaga (Amoeba).